Consider the following 305-residue polypeptide: Protein ORANGE, chloroplastic (305 aa).

A chloroplast-targeting transit peptide spans 1–54; that stretch reads MSCLGRILSVSYPPDPYGSRLSVSKLSSPGRNRRLRWRFTALDSDSSSLDSDSS. Helical transmembrane passes span 144 to 164 and 197 to 217; these read VYYA…GLLA and IVAS…VVEV. The segment at 206–297 is CR-type-like; that stretch reads VGVISALMVV…CTGMAMASEH (92 aa). The stretch at 228–235 is one CXXCXGXG motif repeat; that stretch reads CKYCLGTG. The stretch at 239–246 is one CXXCXXXG motif repeat; sequence CARCSSTG. The CXXCXGXG motif repeat unit spans residues 272 to 279; that stretch reads CSNCSGAG. One copy of the CXXCXXXG motif repeat lies at 283–290; sequence CPTCLCTG.

It belongs to the orange-like family. In terms of assembly, interacts with ERF1-2. As to expression, expressed in young leaves, curds and flower buds.

The protein resides in the plastid. It localises to the chloroplast membrane. It is found in the nucleus. In terms of biological role, involved in chromoplast differentiation. Is associated with a cellular process that triggers the differentiation of pro-plastids or other non-colored plastids into chromoplasts for carotenoid accumulation. Associated with carotenoid accumulation in de-etiolated cotyledons. Controls leaf petiole elongation by suppressing the expression of ERF1 genes. The chain is Protein ORANGE, chloroplastic from Brassica oleracea var. botrytis (Cauliflower).